Reading from the N-terminus, the 237-residue chain is Uridylate kinase (237 aa).

Position 11–14 (11–14 (KLSG)) interacts with ATP. Gly53 provides a ligand contact to UMP. Gly54 and Arg58 together coordinate ATP. UMP-binding positions include Asp73 and 134-141 (TGNPFFTT). ATP contacts are provided by Thr161, Tyr167, and Asp170.

Belongs to the UMP kinase family. As to quaternary structure, homohexamer.

It is found in the cytoplasm. It carries out the reaction UMP + ATP = UDP + ADP. The protein operates within pyrimidine metabolism; CTP biosynthesis via de novo pathway; UDP from UMP (UMPK route): step 1/1. Its activity is regulated as follows. Inhibited by UTP. Catalyzes the reversible phosphorylation of UMP to UDP. This is Uridylate kinase from Nitrosomonas eutropha (strain DSM 101675 / C91 / Nm57).